Reading from the N-terminus, the 380-residue chain is Selenoprotein P (380 aa).

Positions 1-19 (MWRSLGLALALCLLPYGGA) are cleaved as a signal peptide. A non-standard amino acid (selenocysteine) is located at residue selenocysteine 59. 3 N-linked (GlcNAc...) asparagine glycosylation sites follow: asparagine 83, asparagine 176, and asparagine 195. Residues 196–257 (KTAEPSEAHS…RGQHRQGHLE (62 aa)) form a disordered region. Residues 221 to 237 (SKPSENQQPGPSETTLP) are compositionally biased toward polar residues. Residues 241 to 253 (LHHHHRHRGQHRQ) are compositionally biased toward basic residues. Position 259 (selenocysteine 259) is a non-standard amino acid, selenocysteine. Phosphoserine is present on serine 264. 4 non-standard amino acids (selenocysteine) are found at residues selenocysteine 277, selenocysteine 318, selenocysteine 330, and selenocysteine 352. Residues 346–380 (RSPPAAUQNQPMNPMEANPNUSUDNQTRKUKUHSN) are disordered. Over residues 348 to 360 (PPAAUQNQPMNPM) the composition is skewed to low complexity. N-linked (GlcNAc...) asparagine glycosylation occurs at asparagine 365. 2 non-standard amino acids (selenocysteine) are found at residues selenocysteine 366 and selenocysteine 368. Asparagine 370 carries an N-linked (GlcNAc...) asparagine glycan. Residues selenocysteine 375 and selenocysteine 377 are each a non-standard amino acid (selenocysteine).

This sequence belongs to the selenoprotein P family. In terms of processing, phosphorylation sites are present in the extracellular medium. As to expression, in the kidney, expressed in the cortex with no expression observed in the medulla (at protein level). Expressed by the liver and secreted in plasma.

It is found in the secreted. Functionally, might be responsible for some of the extracellular antioxidant defense properties of selenium or might be involved in the transport of selenium. May supply selenium to tissues such as brain and testis. The polypeptide is Selenoprotein P (Mus musculus (Mouse)).